The sequence spans 417 residues: Serine hydroxymethyltransferase (417 aa).

(6S)-5,6,7,8-tetrahydrofolate is bound by residues Leu-121 and 125 to 127; that span reads GHL. Lys-229 carries the post-translational modification N6-(pyridoxal phosphate)lysine. 355–357 is a (6S)-5,6,7,8-tetrahydrofolate binding site; that stretch reads SPF.

Belongs to the SHMT family. Homodimer. The cofactor is pyridoxal 5'-phosphate.

It localises to the cytoplasm. The catalysed reaction is (6R)-5,10-methylene-5,6,7,8-tetrahydrofolate + glycine + H2O = (6S)-5,6,7,8-tetrahydrofolate + L-serine. Its pathway is one-carbon metabolism; tetrahydrofolate interconversion. The protein operates within amino-acid biosynthesis; glycine biosynthesis; glycine from L-serine: step 1/1. Its function is as follows. Catalyzes the reversible interconversion of serine and glycine with tetrahydrofolate (THF) serving as the one-carbon carrier. This reaction serves as the major source of one-carbon groups required for the biosynthesis of purines, thymidylate, methionine, and other important biomolecules. Also exhibits THF-independent aldolase activity toward beta-hydroxyamino acids, producing glycine and aldehydes, via a retro-aldol mechanism. The sequence is that of Serine hydroxymethyltransferase from Shewanella baltica (strain OS155 / ATCC BAA-1091).